The sequence spans 107 residues: U1-lycotoxin-Ls1q (107 aa).

A signal peptide spans 1-20; that stretch reads MMKVLVVVALLVTLISYSSS. Residues 21 to 41 constitute a propeptide that is removed on maturation; it reads EGIDDLEADELLSLMANEQTR. 4 cysteine pairs are disulfide-bonded: Cys-44-Cys-59, Cys-51-Cys-68, Cys-58-Cys-86, and Cys-70-Cys-84.

Belongs to the neurotoxin 19 (CSTX) family. 04 (U1-Lctx) subfamily. Expressed by the venom gland.

It is found in the secreted. The polypeptide is U1-lycotoxin-Ls1q (Lycosa singoriensis (Wolf spider)).